Here is a 459-residue protein sequence, read N- to C-terminus: UDP-N-acetylmuramoylalanine--D-glutamate ligase (459 aa).

Residue 119–125 participates in ATP binding; the sequence is GTNGKTT.

This sequence belongs to the MurCDEF family.

The protein localises to the cytoplasm. The catalysed reaction is UDP-N-acetyl-alpha-D-muramoyl-L-alanine + D-glutamate + ATP = UDP-N-acetyl-alpha-D-muramoyl-L-alanyl-D-glutamate + ADP + phosphate + H(+). Its pathway is cell wall biogenesis; peptidoglycan biosynthesis. Its function is as follows. Cell wall formation. Catalyzes the addition of glutamate to the nucleotide precursor UDP-N-acetylmuramoyl-L-alanine (UMA). This chain is UDP-N-acetylmuramoylalanine--D-glutamate ligase, found in Lacticaseibacillus paracasei (strain ATCC 334 / BCRC 17002 / CCUG 31169 / CIP 107868 / KCTC 3260 / NRRL B-441) (Lactobacillus paracasei).